The following is a 109-amino-acid chain: Cell cycle protein GpsB (109 aa).

A coiled-coil region spans residues 36-63 (IKDYETYAALVKSLRQEIADLKEELTRK).

It belongs to the GpsB family. In terms of assembly, forms polymers through the coiled coil domains. Interacts with PBP1, MreC and EzrA.

It localises to the cytoplasm. In terms of biological role, divisome component that associates with the complex late in its assembly, after the Z-ring is formed, and is dependent on DivIC and PBP2B for its recruitment to the divisome. Together with EzrA, is a key component of the system that regulates PBP1 localization during cell cycle progression. Its main role could be the removal of PBP1 from the cell pole after pole maturation is completed. Also contributes to the recruitment of PBP1 to the division complex. Not essential for septum formation. In Streptococcus pneumoniae serotype 4 (strain ATCC BAA-334 / TIGR4), this protein is Cell cycle protein GpsB.